The primary structure comprises 301 residues: tRNA (guanine-N(7)-)-methyltransferase (301 aa).

The tract at residues 1 to 26 is disordered; sequence MSETPDSPRPVTPGSQASFGTYGGRP. S-adenosyl-L-methionine is bound by residues Glu85, Glu110, Asn137, and Asp160. Residue Asp160 is part of the active site. 2 residues coordinate substrate: Lys164 and Asp196. A disordered region spans residues 244-270; that stretch reads APVREGRAPVSTEHTGPNEGVDEEGGW. 280–283 is a binding site for substrate; sequence TSFE.

The protein belongs to the class I-like SAM-binding methyltransferase superfamily. TrmB family.

The enzyme catalyses guanosine(46) in tRNA + S-adenosyl-L-methionine = N(7)-methylguanosine(46) in tRNA + S-adenosyl-L-homocysteine. Its pathway is tRNA modification; N(7)-methylguanine-tRNA biosynthesis. Catalyzes the formation of N(7)-methylguanine at position 46 (m7G46) in tRNA. The polypeptide is tRNA (guanine-N(7)-)-methyltransferase (Paenarthrobacter aurescens (strain TC1)).